Consider the following 652-residue polypeptide: DNA ligase (652 aa).

Residues 29–33, 78–79, and Glu-107 each bind NAD(+); these read DSEYD and SL. Catalysis depends on Lys-109, which acts as the N6-AMP-lysine intermediate. Arg-130, Glu-164, Lys-278, and Lys-302 together coordinate NAD(+). Residues Cys-395, Cys-398, Cys-413, and Cys-418 each contribute to the Zn(2+) site. A BRCT domain is found at 577-652; that stretch reads VADAALSGLT…VRDEAWLESL (76 aa).

This sequence belongs to the NAD-dependent DNA ligase family. LigA subfamily. The cofactor is Mg(2+). Mn(2+) serves as cofactor.

It carries out the reaction NAD(+) + (deoxyribonucleotide)n-3'-hydroxyl + 5'-phospho-(deoxyribonucleotide)m = (deoxyribonucleotide)n+m + AMP + beta-nicotinamide D-nucleotide.. DNA ligase that catalyzes the formation of phosphodiester linkages between 5'-phosphoryl and 3'-hydroxyl groups in double-stranded DNA using NAD as a coenzyme and as the energy source for the reaction. It is essential for DNA replication and repair of damaged DNA. The polypeptide is DNA ligase (Streptococcus pneumoniae (strain Hungary19A-6)).